A 413-amino-acid chain; its full sequence is Phosphopentomutase (413 aa).

The Mn(2+) site is built by Asp11, Asp306, His311, Asp347, His348, and His359.

This sequence belongs to the phosphopentomutase family. Mn(2+) is required as a cofactor.

The protein localises to the cytoplasm. The enzyme catalyses 2-deoxy-alpha-D-ribose 1-phosphate = 2-deoxy-D-ribose 5-phosphate. It catalyses the reaction alpha-D-ribose 1-phosphate = D-ribose 5-phosphate. The protein operates within carbohydrate degradation; 2-deoxy-D-ribose 1-phosphate degradation; D-glyceraldehyde 3-phosphate and acetaldehyde from 2-deoxy-alpha-D-ribose 1-phosphate: step 1/2. Isomerase that catalyzes the conversion of deoxy-ribose 1-phosphate (dRib-1-P) and ribose 1-phosphate (Rib-1-P) to deoxy-ribose 5-phosphate (dRib-5-P) and ribose 5-phosphate (Rib-5-P), respectively. The protein is Phosphopentomutase of Helicobacter pylori (strain Shi470).